The chain runs to 126 residues: Fluoride-specific ion channel FluC 2 (126 aa).

Helical transmembrane passes span 7-27 (MWVG…GLSI), 37-57 (LGTF…SILF), 65-85 (YGDL…TTFS), and 101-121 (AIAA…AAFG). Positions 79 and 82 each coordinate Na(+).

The protein belongs to the fluoride channel Fluc/FEX (TC 1.A.43) family.

Its subcellular location is the cell inner membrane. It catalyses the reaction fluoride(in) = fluoride(out). Its activity is regulated as follows. Na(+) is not transported, but it plays an essential structural role and its presence is essential for fluoride channel function. Its function is as follows. Fluoride-specific ion channel. Important for reducing fluoride concentration in the cell, thus reducing its toxicity. In Yersinia pseudotuberculosis serotype I (strain IP32953), this protein is Fluoride-specific ion channel FluC 2.